The sequence spans 323 residues: Glutamyl-Q tRNA(Asp) synthetase (323 aa).

L-glutamate is bound by residues 5–9 (RFAPT) and Glu41. The short motif at 8 to 18 (PTPSGALHLGN) is the 'HIGH' region element. Positions 105, 107, 129, and 133 each coordinate Zn(2+). The L-glutamate site is built by Tyr193 and Arg211. The short motif at 249-253 (RLAKR) is the 'KMSKS' region element. Lys252 provides a ligand contact to ATP.

Belongs to the class-I aminoacyl-tRNA synthetase family. GluQ subfamily. Zn(2+) is required as a cofactor.

Catalyzes the tRNA-independent activation of glutamate in presence of ATP and the subsequent transfer of glutamate onto a tRNA(Asp). Glutamate is transferred on the 2-amino-5-(4,5-dihydroxy-2-cyclopenten-1-yl) moiety of the queuosine in the wobble position of the QUC anticodon. The polypeptide is Glutamyl-Q tRNA(Asp) synthetase (Symbiobacterium thermophilum (strain DSM 24528 / JCM 14929 / IAM 14863 / T)).